The primary structure comprises 324 residues: Lignin-forming anionic peroxidase (324 aa).

The signal sequence occupies residues 1–22 (MSFLRFVGAILFLVAIFGASNA). Gln-23 is modified (pyrrolidone carboxylic acid). Intrachain disulfides connect Cys-33-Cys-111, Cys-66-Cys-71, Cys-117-Cys-320, and Cys-196-Cys-228. Asn-35 carries N-linked (GlcNAc...) asparagine glycosylation. The active-site Proton acceptor is the His-64. Asp-65, Val-68, Gly-70, Asp-72, and Ser-74 together coordinate Ca(2+). N-linked (GlcNAc...) asparagine glycosylation occurs at Asn-150. Pro-159 is a substrate binding site. His-189 lines the heme b pocket. Position 190 (Thr-190) interacts with Ca(2+). N-linked (GlcNAc...) asparagine glycosylation is present at Asn-207. Asp-242, Thr-245, and Asp-250 together coordinate Ca(2+).

Belongs to the peroxidase family. Classical plant (class III) peroxidase subfamily. It depends on Ca(2+) as a cofactor. Requires heme b as cofactor.

It localises to the secreted. The enzyme catalyses 2 a phenolic donor + H2O2 = 2 a phenolic radical donor + 2 H2O. Its function is as follows. Removal of H(2)O(2), oxidation of toxic reductants, biosynthesis and degradation of lignin, suberization, auxin catabolism, response to environmental stresses such as wounding, pathogen attack and oxidative stress. These functions might be dependent on each isozyme/isoform in each plant tissue. Functionally, plays an integral role in secondary cell wall biosynthesis by the polymerization of cinnamyl alcohols into lignin and by forming rigid cross-links between cellulose, pectin, hydroxy-proline-rich glycoproteins, and lignin. The polypeptide is Lignin-forming anionic peroxidase (Nicotiana tabacum (Common tobacco)).